The chain runs to 342 residues: Ketol-acid reductoisomerase (NADP(+)) (342 aa).

A KARI N-terminal Rossmann domain is found at 2-182 (AEIYYDNDAD…GGLRAGGIKT (181 aa)). NADP(+)-binding positions include 25–28 (YGSQ), lysine 48, serine 51, serine 53, and 83–86 (DQVQ). The active site involves histidine 108. Glycine 134 provides a ligand contact to NADP(+). A KARI C-terminal knotted domain is found at 183-328 (TFTEETETDL…RELRKLFAWN (146 aa)). Residues aspartate 191, glutamate 195, glutamate 227, and glutamate 231 each coordinate Mg(2+). Residue serine 252 participates in substrate binding.

The protein belongs to the ketol-acid reductoisomerase family. The cofactor is Mg(2+).

It carries out the reaction (2R)-2,3-dihydroxy-3-methylbutanoate + NADP(+) = (2S)-2-acetolactate + NADPH + H(+). It catalyses the reaction (2R,3R)-2,3-dihydroxy-3-methylpentanoate + NADP(+) = (S)-2-ethyl-2-hydroxy-3-oxobutanoate + NADPH + H(+). It participates in amino-acid biosynthesis; L-isoleucine biosynthesis; L-isoleucine from 2-oxobutanoate: step 2/4. Its pathway is amino-acid biosynthesis; L-valine biosynthesis; L-valine from pyruvate: step 2/4. Functionally, involved in the biosynthesis of branched-chain amino acids (BCAA). Catalyzes an alkyl-migration followed by a ketol-acid reduction of (S)-2-acetolactate (S2AL) to yield (R)-2,3-dihydroxy-isovalerate. In the isomerase reaction, S2AL is rearranged via a Mg-dependent methyl migration to produce 3-hydroxy-3-methyl-2-ketobutyrate (HMKB). In the reductase reaction, this 2-ketoacid undergoes a metal-dependent reduction by NADPH to yield (R)-2,3-dihydroxy-isovalerate. The polypeptide is Ketol-acid reductoisomerase (NADP(+)) (Leifsonia xyli subsp. xyli (strain CTCB07)).